Here is a 399-residue protein sequence, read N- to C-terminus: Phospholipase C (399 aa).

Positions 1–28 (MNKKKILKFICSAVLSFTLFSGYKSYAW) are cleaved as a signal peptide. Positions 28, 38, 83, 95, 153, 157, 163, 175, and 179 each coordinate Zn(2+). Residues 29 to 277 (DGKVDGTGTH…NEVSGTINTT (249 aa)) enclose the Zn-dependent PLC domain. Residues 275–282 (NTTENSKI) are linker. The PLAT domain occupies 283-399 (NEIMVVIKTA…DNKTFYINNK (117 aa)). Residues Gly-298, Thr-299, Asp-300, Asp-320, Asn-321, Gly-323, Asn-324, Asp-325, and Asp-363 each contribute to the Ca(2+) site.

The protein belongs to the bacterial zinc-metallophospholipase C family. Requires Ca(2+) as cofactor. Zn(2+) serves as cofactor.

It localises to the secreted. It catalyses the reaction a 1,2-diacyl-sn-glycero-3-phosphocholine + H2O = phosphocholine + a 1,2-diacyl-sn-glycerol + H(+). Bacterial hemolysins are exotoxins that attack blood cell membranes and cause cell rupture. Binds to eukaryotic membranes where it hydrolyzes phosphatidylcholine, sphingomyelin and phosphatidylethanolamine. The diacylglycerol produced can activate both the arachidonic acid pathway, leading to modulation of the inflammatory response cascade and thrombosis, and protein kinase C, leading to activation of eukaryotic phospholipases and further membrane damage. The protein is Phospholipase C (plc) of Clostridium haemolyticum.